The chain runs to 98 residues: NADH-ubiquinone oxidoreductase chain 4L (98 aa).

The next 3 membrane-spanning stretches (helical) occupy residues 1–21 (MPLI…GLLM), 29–49 (ALLC…LLAL), and 61–81 (IILL…LVMI).

Belongs to the complex I subunit 4L family. As to quaternary structure, core subunit of respiratory chain NADH dehydrogenase (Complex I) which is composed of 45 different subunits.

The protein resides in the mitochondrion inner membrane. It carries out the reaction a ubiquinone + NADH + 5 H(+)(in) = a ubiquinol + NAD(+) + 4 H(+)(out). In terms of biological role, core subunit of the mitochondrial membrane respiratory chain NADH dehydrogenase (Complex I) which catalyzes electron transfer from NADH through the respiratory chain, using ubiquinone as an electron acceptor. Part of the enzyme membrane arm which is embedded in the lipid bilayer and involved in proton translocation. This Kogia breviceps (Pygmy sperm whale) protein is NADH-ubiquinone oxidoreductase chain 4L (MT-ND4L).